The sequence spans 388 residues: Succinate--CoA ligase [ADP-forming] subunit beta (388 aa).

In terms of domain architecture, ATP-grasp spans 9–244; sequence KEILRKYNVP…LDEEDANEIE (236 aa). ATP-binding positions include lysine 46, 53–55, glutamate 99, alanine 102, and glutamate 107; that span reads GRG. Residues asparagine 199 and aspartate 213 each contribute to the Mg(2+) site. Residues asparagine 264 and 321 to 323 contribute to the substrate site; that span reads GIM.

The protein belongs to the succinate/malate CoA ligase beta subunit family. In terms of assembly, heterotetramer of two alpha and two beta subunits. Mg(2+) is required as a cofactor.

The catalysed reaction is succinate + ATP + CoA = succinyl-CoA + ADP + phosphate. It carries out the reaction GTP + succinate + CoA = succinyl-CoA + GDP + phosphate. Its pathway is carbohydrate metabolism; tricarboxylic acid cycle; succinate from succinyl-CoA (ligase route): step 1/1. In terms of biological role, succinyl-CoA synthetase functions in the citric acid cycle (TCA), coupling the hydrolysis of succinyl-CoA to the synthesis of either ATP or GTP and thus represents the only step of substrate-level phosphorylation in the TCA. The beta subunit provides nucleotide specificity of the enzyme and binds the substrate succinate, while the binding sites for coenzyme A and phosphate are found in the alpha subunit. This Ralstonia nicotianae (strain ATCC BAA-1114 / GMI1000) (Ralstonia solanacearum) protein is Succinate--CoA ligase [ADP-forming] subunit beta.